The chain runs to 390 residues: Phosphoglycerate kinase (390 aa).

Residues Asp-19–Asn-21, Arg-34, His-57–Arg-60, Arg-115, and Arg-148 contribute to the substrate site. Residues Lys-198, Gly-289, Glu-320, and Gly-347 to Ser-350 each bind ATP.

It belongs to the phosphoglycerate kinase family. In terms of assembly, monomer.

It is found in the cytoplasm. It carries out the reaction (2R)-3-phosphoglycerate + ATP = (2R)-3-phospho-glyceroyl phosphate + ADP. It functions in the pathway carbohydrate degradation; glycolysis; pyruvate from D-glyceraldehyde 3-phosphate: step 2/5. In Thermus thermophilus (strain ATCC BAA-163 / DSM 7039 / HB27), this protein is Phosphoglycerate kinase.